Consider the following 22-residue polypeptide: Caerin-3.2 (22 aa).

At K22 the chain carries Lysine amide.

Expressed by the skin parotoid and/or rostral glands.

Its subcellular location is the secreted. Functionally, antibacterial peptide, that adopts an alpha helical conformation which can disrupt bacterial membranes. Each caerin displays a different antimicrobial specificity. In Ranoidea caerulea (Green tree frog), this protein is Caerin-3.2.